The chain runs to 143 residues: Small ribosomal subunit protein eS6 (143 aa).

Belongs to the eukaryotic ribosomal protein eS6 family.

The protein is Small ribosomal subunit protein eS6 of Methanoregula boonei (strain DSM 21154 / JCM 14090 / 6A8).